Here is a 274-residue protein sequence, read N- to C-terminus: Large ribosomal subunit protein uL2cz/uL2cy (274 aa).

Disordered regions lie at residues 1 to 23 (MAIH…SQVK) and 224 to 274 (NPVD…RRSK).

This sequence belongs to the universal ribosomal protein uL2 family. In terms of assembly, part of the 50S ribosomal subunit.

The protein localises to the plastid. It localises to the chloroplast. This is Large ribosomal subunit protein uL2cz/uL2cy (rpl2-A) from Vitis vinifera (Grape).